Consider the following 869-residue polypeptide: Leucine--tRNA ligase (869 aa).

The short motif at Pro51–His61 is the 'HIGH' region element. The 'KMSKS' region motif lies at Lys636–Ser640. Lys639 lines the ATP pocket.

Belongs to the class-I aminoacyl-tRNA synthetase family.

Its subcellular location is the cytoplasm. It carries out the reaction tRNA(Leu) + L-leucine + ATP = L-leucyl-tRNA(Leu) + AMP + diphosphate. The sequence is that of Leucine--tRNA ligase from Dinoroseobacter shibae (strain DSM 16493 / NCIMB 14021 / DFL 12).